A 1320-amino-acid chain; its full sequence is MPSGSKSKKKKSKSKGGVKKHAVEKVAPPIEAEIMDERDESDYPTSRVIKRGPNGDVIVESLPDKSTSGKKSKKKGKLSDLEVSESAKQMGITLDSHWESLSPDEKKNILRIEKEEVLEIIRNYQNDHNCSCSVCGRRHMAMNQEMERMYNLLYELEEQRDPDMNPVKFHLGIIKELQISKNKQILDQTEGPNDNTTHEEVVKNFLSSDIADKLKEEVHQFKQKQLSKQECNRPSSLANDNIEEEIPCAQIPQANEEAMTKDIQKTLEQLSVVEPVSKINVIQEDDLGEIKEENKEYLKFTESFISSQPKIAQKFIQKLDENPCMKAITDEVMQNSSYEFLDALKNLWAPNLLKIVESEDDDNLVNLNETLDPIEFTTMLHHGNPLSQQDYYDLQGAISRKVVNAFNFENRKLEHLSPLEVELFGRFMSSDQDNIFHNMLLEAYNERFKEEPFKMMSNIPQIIKAVATLTNLDGRMMDDVDENHFTSEEERYDDDITDYSDSEYEDYDSEYDDIDNGDIISDVDEPFSTLKSDQLRVNYDTNSGNINHSDNYESNSRLREVTDENEENLQYDTPQEKYNYSDHGKDHGTIADEDEDSIDEGYESSIDDMERLEEGRRLIQIAITKLLQGRIMESYHEKEADSNRLKLLKELEEEQMKKKEKEVKKIKKKEKEKEKRRLQQLAKEEEKRKKEEEERSAREEQERREMERREAQRKKVEEAKRKKDEERRRKLEEQRKREEQQEKQRKAKEEQKRKREEEKKKKEELERQLREEELMKKKEEEERLLREKERAEILKKETELAMSMKENHSSQSLSIQNQFFSNPQNSNIGMQNYFNNDLDNTNAGLGNGGPTNLGVRKNSHVLGLTQVYSDKANNSPGKNDDNNEINNEILNIINAATTAKSGSRTSMDMQALLQPPFTDNVNDQIRSSNLINDQASGMNSNGLSTNFHSPYGSNVFSGENQLSNNLQNDILTGLNADTSSTNLASWTSLPALNNLNANQHILSNNQTPLHQQKGTSPISNTMMDTKRDYLGDELSKLTTMLTTNSLNESPAFSSSNLQSSLWNDQNSSGKTPLGSNTTQIPLSQPAFLGTEPPVHRSSIWGDSSASMFNFSQRLSVPTNSNSVSSQTVPNQNIGMGSSFTNPSIWSTGSDFNVPSRDMNSGVAFTNSFSNTSPRNQFALNSGSMLQNQSQRQNIMDNIRLLSNSPQNNGYIPIDLLYQSINKQSTSDFPSFLNNVIDLERSHNYDLVKDQTGVINGVRVGSENRPVSTAFSNFHQNMDPTMKGPEHLSNSIPGTARNFEGNSYLAKEATMNIIPSSSLDR.

The segment covering 1–22 has biased composition (basic residues); that stretch reads MPSGSKSKKKKSKSKGGVKKHA. 4 disordered regions span residues 1 to 85, 541 to 598, 656 to 766, and 1048 to 1073; these read MPSG…EVSE, TNSG…EDSI, MKKK…EELE, and ESPA…KTPL. Positions 33-42 are enriched in acidic residues; the sequence is EIMDERDESD. A compositionally biased stretch (polar residues) spans 541–555; sequence TNSGNINHSDNYESN. The span at 579–590 shows a compositional bias: basic and acidic residues; that stretch reads NYSDHGKDHGTI. Positions 637-807 form a coiled coil; sequence EKEADSNRLK…TELAMSMKEN (171 aa).

This sequence belongs to the NST1 family.

It is found in the cytoplasm. Functionally, may act as a negative regulator of salt tolerance. The chain is Stress response protein NST1 (NST1) from Candida glabrata (strain ATCC 2001 / BCRC 20586 / JCM 3761 / NBRC 0622 / NRRL Y-65 / CBS 138) (Yeast).